A 119-amino-acid chain; its full sequence is Large ribosomal subunit protein bL17 (119 aa).

It belongs to the bacterial ribosomal protein bL17 family. Part of the 50S ribosomal subunit. Contacts protein L32.

The sequence is that of Large ribosomal subunit protein bL17 from Psychrobacter sp. (strain PRwf-1).